We begin with the raw amino-acid sequence, 749 residues long: Meiotically up-regulated gene 122 protein (749 aa).

The Cytoplasmic portion of the chain corresponds to 1-20 (MYRKWDLCITRHLLPYIEHS). The chain crosses the membrane as a helical; Signal-anchor for type II membrane protein span at residues 21 to 41 (VIPIIALLVLSLIFYILYICF). The Lumenal portion of the chain corresponds to 42-749 (GTTSYILSGI…LLSNALRSII (708 aa)). One can recognise a PXA domain in the interval 88-261 (PPELEAPLQL…CIILYFSSSE (174 aa)). In terms of domain architecture, PX spans 311 to 422 (LHYQFLKEAS…KFFAKSMRSH (112 aa)). 2 disordered regions span residues 439–489 (QSSS…LSQQ) and 504–546 (GSCT…PPKP). Polar residues-rich tracts occupy residues 440 to 461 (SSSV…NKTS) and 475 to 489 (LSHQ…LSQQ).

It belongs to the sorting nexin family.

Its subcellular location is the endoplasmic reticulum membrane. Has a role in meiosis. The sequence is that of Meiotically up-regulated gene 122 protein (mug122) from Schizosaccharomyces pombe (strain 972 / ATCC 24843) (Fission yeast).